The primary structure comprises 394 residues: Elongation factor Tu 1 (394 aa).

Positions 10–204 (KPHVNVGTIG…HLDTYIPEPE (195 aa)) constitute a tr-type G domain. A G1 region spans residues 19 to 26 (GHVDHGKT). Residue 19–26 (GHVDHGKT) coordinates GTP. Residue Thr26 coordinates Mg(2+). A G2 region spans residues 60–64 (GITIN). The G3 stretch occupies residues 81 to 84 (DCPG). GTP-binding positions include 81–85 (DCPGH) and 136–139 (NKCD). The tract at residues 136-139 (NKCD) is G4. The segment at 174 to 176 (SAL) is G5.

It belongs to the TRAFAC class translation factor GTPase superfamily. Classic translation factor GTPase family. EF-Tu/EF-1A subfamily. Monomer.

The protein localises to the cytoplasm. The enzyme catalyses GTP + H2O = GDP + phosphate + H(+). Its function is as follows. GTP hydrolase that promotes the GTP-dependent binding of aminoacyl-tRNA to the A-site of ribosomes during protein biosynthesis. The sequence is that of Elongation factor Tu 1 from Haemophilus influenzae (strain 86-028NP).